We begin with the raw amino-acid sequence, 892 residues long: MGDHHNLTGLPGTSIPPQFNYSQPGTSTGGPLYGGKPSHGLEDIPDVEEYERNLLGAGAGFNLLNVGNMANEFKPIITLDTKPPRDANKSLAFNGGLKLITPKTEVPDEHTPMMSPVNTTTKILQRSGIKMEIPPYLDPDSQDDDPEDGVNYPDPDLFDTKNTNMTEYDLDVLKLGKPAVDEARKKIEVPDASAPPNKIVEYLMYYRTLKESELIQLNAYRTKRNRLSLNLVKNNIDREFDQKACESLVKKLKDKKNDLQNLIDVVLSKGTKYTGCITIPRTLDGRLQVHGRKGFPHVVYGKLWRFNEMTKNETRHVDHCKHAFEMKSDMVCVNPYHYEIVIGTMIVGQRDHDNRDMPPPHQRYHTPGRQDPVDDMSRFIPPASIRPPPMNMHTRPQPMPQQLPSVGATFAHPLPHQAPHNPGVSHPYSIAPQTHYPLNMNPIPQMPQMPQMPPPLHQGYGMNGPSCSSENNNPFHQNHHYNDISHPNHYSYDCGPNLYGFPTPYPDFHHPFNQQPHQPPQLSQNHTSQQGSHQPGHQGQVPNDPPISRPVLQPSTVTLDVFRRYCRQTFGNRFFEGESEQSGAIIRSSNKFIEEFDSPICGVTVVRPRMTDGEVLENIMPEDAPYHDICKFILRLTSESVTFSGEGPEVSDLNEKWGTIVYYEKNLQIGEKKCSRGNFHVDGGFICSENRYSLGLEPNPIREPVAFKVRKAIVDGIRFSYKKDGSVWLQNRMKYPVFVTSGYLDEQSGGLKKDKVHKVYGCASIKTFGFNVSKQIIRDALLSKQMATMYLQGKLTPMNYIYEKKTQEELRREATRTTDSLAKYCCVRVSFCKGFGEAYPERPSIHDCPVWIELKINIAYDFMDSICQYITNCFEPLGMEDFAKLGINVSDD.

2 disordered regions span residues 1–43 (MGDH…GLED) and 135–161 (PYLD…FDTK). Positions 15–26 (IPPQFNYSQPGT) are enriched in polar residues. The MH1 domain maps to 198-347 (KIVEYLMYYR…YEIVIGTMIV (150 aa)). Residues 505-552 (YPDFHHPFNQQPHQPPQLSQNHTSQQGSHQPGHQGQVPNDPPISRPVL) form a disordered region. Low complexity predominate over residues 528–540 (SQQGSHQPGHQGQ). The region spanning 657 to 880 (WGTIVYYEKN…TNCFEPLGME (224 aa)) is the MH2 domain.

It belongs to the dwarfin/SMAD family. Interacts with R-SMADs daf-8 and daf-14. Interacts with daf-14 in a daf-8 dependent manner. May interact with daf-5.

The protein resides in the cytoplasm. It localises to the nucleus. Its subcellular location is the chromosome. Transcriptional regulator and common SMAD (co-SMAD), required to regulate entry into a developmentally arrested larval state known as dauer, in response to harsh environmental conditions. Probable component of transcriptional regulatory complex with SMAD protein daf-5. Acts antagonistically to SMAD signaling downstream of TGF-beta-like daf-7 signaling. Binds to the 5'-GTCTG-3' motif found in regulatory regions and may modulate the expression of genes involved in TGF-beta-like daf-7 and Notch lag-2 signaling. May regulate gene expression outside the dauer pathway. This chain is Smad protein daf-3, found in Caenorhabditis elegans.